The following is a 256-amino-acid chain: Small ribosomal subunit protein eS1 (256 aa).

A compositionally biased stretch (basic residues) spans 1–18; the sequence is MAVGKNKRLSKGKKGLKK. The segment at 1 to 22 is disordered; that stretch reads MAVGKNKRLSKGKKGLKKKTQD. The residue at position 2 (alanine 2) is an N-acetylalanine; partial.

The protein belongs to the eukaryotic ribosomal protein eS1 family. Component of the small ribosomal subunit (SSU). Mature N.crassa ribosomes consist of a small (40S) and a large (60S) subunit. The 40S small subunit contains 1 molecule of ribosomal RNA (18S rRNA) and at least 32 different proteins. The large 60S subunit contains 3 rRNA molecules (26S, 5.8S and 5S rRNA) and at least 42 different proteins.

Its subcellular location is the cytoplasm. Component of the ribosome, a large ribonucleoprotein complex responsible for the synthesis of proteins in the cell. The small ribosomal subunit (SSU) binds messenger RNAs (mRNAs) and translates the encoded message by selecting cognate aminoacyl-transfer RNA (tRNA) molecules. The large subunit (LSU) contains the ribosomal catalytic site termed the peptidyl transferase center (PTC), which catalyzes the formation of peptide bonds, thereby polymerizing the amino acids delivered by tRNAs into a polypeptide chain. The nascent polypeptides leave the ribosome through a tunnel in the LSU and interact with protein factors that function in enzymatic processing, targeting, and the membrane insertion of nascent chains at the exit of the ribosomal tunnel. This Neurospora crassa (strain ATCC 24698 / 74-OR23-1A / CBS 708.71 / DSM 1257 / FGSC 987) protein is Small ribosomal subunit protein eS1 (rps1).